The primary structure comprises 341 residues: Dihydroorotate dehydrogenase (quinone) (341 aa).

FMN-binding positions include 61–65 and Thr85; that span reads AGLDK. Lys65 serves as a coordination point for substrate. 110–114 contributes to the substrate binding site; sequence NRMGF. FMN-binding residues include Asn138 and Asn171. Asn171 lines the substrate pocket. The active-site Nucleophile is the Ser174. Residue Asn176 participates in substrate binding. Lys216 and Thr244 together coordinate FMN. 245–246 is a binding site for substrate; that stretch reads NT. FMN-binding positions include Gly267, Gly296, and 317–318; that span reads YS.

The protein belongs to the dihydroorotate dehydrogenase family. Type 2 subfamily. In terms of assembly, monomer. It depends on FMN as a cofactor.

It localises to the cell membrane. The enzyme catalyses (S)-dihydroorotate + a quinone = orotate + a quinol. It functions in the pathway pyrimidine metabolism; UMP biosynthesis via de novo pathway; orotate from (S)-dihydroorotate (quinone route): step 1/1. Functionally, catalyzes the conversion of dihydroorotate to orotate with quinone as electron acceptor. The protein is Dihydroorotate dehydrogenase (quinone) of Pseudomonas putida (strain W619).